The chain runs to 153 residues: Neuromedin-S (153 aa).

The N-terminal stretch at 1–26 is a signal peptide; the sequence is MKHPLPHYSPILFIYCFCMLQIPSSG. Propeptides lie at residues 27-69, 70-105, and 106-108; these read ASPP…VYKR, FLFH…ASRR, and MKR. The residue at position 144 (asparagine 144) is an Asparagine amide. Positions 147-153 are excised as a propeptide; sequence YTDNNFQ.

The protein belongs to the NmU family.

The protein localises to the secreted. In terms of biological role, implicated in the regulation of circadian rhythms through autocrine and/or paracrine actions. In Mus musculus (Mouse), this protein is Neuromedin-S (Nms).